Reading from the N-terminus, the 374-residue chain is 3-dehydroquinate synthase (374 aa).

The protein belongs to the archaeal-type DHQ synthase family.

The catalysed reaction is 2-amino-2,3,7-trideoxy-D-lyxo-hept-6-ulosonate + NAD(+) + H2O = 3-dehydroquinate + NH4(+) + NADH + H(+). Its function is as follows. Catalyzes the oxidative deamination and cyclization of 2-amino-3,7-dideoxy-D-threo-hept-6-ulosonic acid (ADH) to yield 3-dehydroquinate (DHQ), which is fed into the canonical shikimic pathway of aromatic amino acid biosynthesis. The chain is 3-dehydroquinate synthase from Methanothermobacter thermautotrophicus (strain ATCC 29096 / DSM 1053 / JCM 10044 / NBRC 100330 / Delta H) (Methanobacterium thermoautotrophicum).